We begin with the raw amino-acid sequence, 254 residues long: Triosephosphate isomerase (254 aa).

12–14 contacts substrate; the sequence is NWK. Histidine 99 (electrophile) is an active-site residue. Glutamate 169 serves as the catalytic Proton acceptor. Substrate-binding positions include glycine 175, serine 214, and 235 to 236; that span reads GG.

This sequence belongs to the triosephosphate isomerase family. In terms of assembly, homodimer.

Its subcellular location is the cytoplasm. The catalysed reaction is D-glyceraldehyde 3-phosphate = dihydroxyacetone phosphate. The protein operates within carbohydrate biosynthesis; gluconeogenesis. It functions in the pathway carbohydrate degradation; glycolysis; D-glyceraldehyde 3-phosphate from glycerone phosphate: step 1/1. In terms of biological role, involved in the gluconeogenesis. Catalyzes stereospecifically the conversion of dihydroxyacetone phosphate (DHAP) to D-glyceraldehyde-3-phosphate (G3P). The protein is Triosephosphate isomerase of Bartonella quintana (strain Toulouse) (Rochalimaea quintana).